The primary structure comprises 194 residues: Peptidyl-tRNA hydrolase (194 aa).

Residue Tyr16 participates in tRNA binding. The Proton acceptor role is filled by His21. Positions 67, 69, and 115 each coordinate tRNA.

Belongs to the PTH family. In terms of assembly, monomer.

The protein localises to the cytoplasm. It carries out the reaction an N-acyl-L-alpha-aminoacyl-tRNA + H2O = an N-acyl-L-amino acid + a tRNA + H(+). Functionally, hydrolyzes ribosome-free peptidyl-tRNAs (with 1 or more amino acids incorporated), which drop off the ribosome during protein synthesis, or as a result of ribosome stalling. Its function is as follows. Catalyzes the release of premature peptidyl moieties from peptidyl-tRNA molecules trapped in stalled 50S ribosomal subunits, and thus maintains levels of free tRNAs and 50S ribosomes. The polypeptide is Peptidyl-tRNA hydrolase (Salmonella dublin (strain CT_02021853)).